The following is a 190-amino-acid chain: MLLFTLCFFADQENGGKALASPPGNWQKADVTFDSNTAFESLVVSPDKKTVENVGVPKGVPDSPERFSSSPCVLGSPGFRSGKHFFEVKYGTQREWAVGLAGKSVKRKGYLRLVPEERIWQKGLWWLRRLETDSDKLQKGSGKIIVFLDYDEGKVIFDLDGEVTTIQANFNGEEVVPFYYIGARVSLANL.

The first 20 residues, 1-20, serve as a signal peptide directing secretion; that stretch reads MLLFTLCFFADQENGGKALA. The B30.2/SPRY domain occupies 21–127; that stretch reads SPPGNWQKAD…RIWQKGLWWL (107 aa). The propeptide occupies 128–190; the sequence is RRLETDSDKL…IGARVSLANL (63 aa).

Expressed by the venom gland.

It localises to the secreted. In terms of biological role, neurotoxin that produces dose-dependent hypolocomotion and hyperalgesia in mice. May directly act on the central nervous system, as it is 6500-fold more potent when administered intracerebroventricularly than intraperitoneal. This Ophiophagus hannah (King cobra) protein is Ohanin.